The primary structure comprises 259 residues: uncharacterized protein (259 aa).

An ABC transporter domain is found at 4–243 (INLKNINLTR…KILTDFYQEK (240 aa)). 36-43 (GLNGSGKS) provides a ligand contact to ATP.

The protein belongs to the ABC transporter superfamily.

This is an uncharacterized protein from Lactococcus lactis subsp. lactis (strain IL1403) (Streptococcus lactis).